The primary structure comprises 90 residues: uncharacterized protein (90 aa).

This is an uncharacterized protein from Mycobacterium tuberculosis (strain ATCC 25618 / H37Rv).